Here is a 160-residue protein sequence, read N- to C-terminus: Cytochrome b6-f complex subunit 4 (160 aa).

Helical transmembrane passes span 36–56, 95–115, and 131–151; these read LLYI…GLAV, LLGV…PFLE, and TVFL…TLPI.

This sequence belongs to the cytochrome b family. PetD subfamily. In terms of assembly, the 4 large subunits of the cytochrome b6-f complex are cytochrome b6, subunit IV (17 kDa polypeptide, petD), cytochrome f and the Rieske protein, while the 4 small subunits are petG, petL, petM and petN. The complex functions as a dimer.

The protein localises to the plastid. The protein resides in the chloroplast thylakoid membrane. In terms of biological role, component of the cytochrome b6-f complex, which mediates electron transfer between photosystem II (PSII) and photosystem I (PSI), cyclic electron flow around PSI, and state transitions. The protein is Cytochrome b6-f complex subunit 4 of Gossypium barbadense (Sea Island cotton).